A 412-amino-acid chain; its full sequence is DNA primase DnaG (412 aa).

A Toprim domain is found at 165–243 (PELIIVEGRA…KLDYVARAPT (79 aa)). The Mg(2+) site is built by Glu-171, Asp-216, and Asp-218.

The protein belongs to the archaeal DnaG primase family. In terms of assembly, forms a ternary complex with MCM helicase and DNA. Component of the archaeal exosome complex. The cofactor is Mg(2+).

The enzyme catalyses ssDNA + n NTP = ssDNA/pppN(pN)n-1 hybrid + (n-1) diphosphate.. Functionally, RNA polymerase that catalyzes the synthesis of short RNA molecules used as primers for DNA polymerase during DNA replication. Also part of the exosome, which is a complex involved in RNA degradation. Acts as a poly(A)-binding protein that enhances the interaction between heteromeric, adenine-rich transcripts and the exosome. The protein is DNA primase DnaG of Sulfolobus acidocaldarius (strain ATCC 33909 / DSM 639 / JCM 8929 / NBRC 15157 / NCIMB 11770).